We begin with the raw amino-acid sequence, 552 residues long: CTP synthase (552 aa).

The amidoligase domain stretch occupies residues 1–270 (MTKYVFVTGG…DRIICEELKL (270 aa)). Ser-13 contacts CTP. Ser-13 contributes to the UTP binding site. ATP contacts are provided by residues 14–19 (SLGKGI) and Asp-71. The Mg(2+) site is built by Asp-71 and Glu-144. CTP contacts are provided by residues 151–153 (DIE), 191–196 (KTKPTQ), and Lys-227. Residues 191 to 196 (KTKPTQ) and Lys-227 contribute to the UTP site. The region spanning 295 to 547 (TIGMVGKYVD…VEAALANKQA (253 aa)) is the Glutamine amidotransferase type-1 domain. Gly-356 contacts L-glutamine. Residue Cys-383 is the Nucleophile; for glutamine hydrolysis of the active site. L-glutamine contacts are provided by residues 384–387 (LGMQ), Glu-407, and Arg-473. Residues His-520 and Glu-522 contribute to the active site.

This sequence belongs to the CTP synthase family. Homotetramer.

The catalysed reaction is UTP + L-glutamine + ATP + H2O = CTP + L-glutamate + ADP + phosphate + 2 H(+). It carries out the reaction L-glutamine + H2O = L-glutamate + NH4(+). The enzyme catalyses UTP + NH4(+) + ATP = CTP + ADP + phosphate + 2 H(+). Its pathway is pyrimidine metabolism; CTP biosynthesis via de novo pathway; CTP from UDP: step 2/2. Its activity is regulated as follows. Allosterically activated by GTP, when glutamine is the substrate; GTP has no effect on the reaction when ammonia is the substrate. The allosteric effector GTP functions by stabilizing the protein conformation that binds the tetrahedral intermediate(s) formed during glutamine hydrolysis. Inhibited by the product CTP, via allosteric rather than competitive inhibition. Its function is as follows. Catalyzes the ATP-dependent amination of UTP to CTP with either L-glutamine or ammonia as the source of nitrogen. Regulates intracellular CTP levels through interactions with the four ribonucleotide triphosphates. The protein is CTP synthase of Burkholderia cenocepacia (strain ATCC BAA-245 / DSM 16553 / LMG 16656 / NCTC 13227 / J2315 / CF5610) (Burkholderia cepacia (strain J2315)).